We begin with the raw amino-acid sequence, 177 residues long: Peptide methionine sulfoxide reductase MsrA (177 aa).

Cysteine 15 is a catalytic residue.

Belongs to the MsrA Met sulfoxide reductase family.

It carries out the reaction L-methionyl-[protein] + [thioredoxin]-disulfide + H2O = L-methionyl-(S)-S-oxide-[protein] + [thioredoxin]-dithiol. It catalyses the reaction [thioredoxin]-disulfide + L-methionine + H2O = L-methionine (S)-S-oxide + [thioredoxin]-dithiol. In terms of biological role, has an important function as a repair enzyme for proteins that have been inactivated by oxidation. Catalyzes the reversible oxidation-reduction of methionine sulfoxide in proteins to methionine. The chain is Peptide methionine sulfoxide reductase MsrA from Listeria monocytogenes serotype 4b (strain CLIP80459).